The primary structure comprises 393 residues: S-adenosylmethionine sensor upstream of mTORC1 (393 aa).

The segment at 1 to 35 (MDLRSSAETDPDLSENHPGSVPAELQSRKQEQEKL) is disordered. Residue R94 coordinates S-adenosyl-L-methionine. The disordered stretch occupies residues 118-141 (DEKSARHATAGNANTDTNAPPQLS). The segment covering 125–136 (ATAGNANTDTNA) has biased composition (low complexity). Positions 160, 178, 190, 191, and 232 each coordinate S-adenosyl-L-methionine. Residues 362–393 (ELPETPYDSDSGESQSSSAPFYELEDPILLQS) are disordered.

This sequence belongs to the BMT2/SAMTOR family. As to quaternary structure, interacts with the GATOR1 complex; interaction is disrupted when samtor binds S-adenosyl-L-methionine. Interacts with the KICSTOR complex; interaction is disrupted when bmt2/samtor binds S-adenosyl-L-methionine.

S-adenosyl-L-methionine-binding protein that acts as an inhibitor of mTORC1 signaling via interaction with the GATOR1 and KICSTOR complexes. Acts as a sensor of S-adenosyl-L-methionine to signal methionine sufficiency to mTORC1: in presence of methionine, binds S-adenosyl-L-methionine, leading to disrupt interaction with the GATOR1 and KICSTOR complexes and promote mTORC1 signaling. Upon methionine starvation, S-adenosyl-L-methionine levels are reduced, thereby promoting the association with GATOR1 and KICSTOR, leading to inhibit mTORC1 signaling. Probably also acts as a S-adenosyl-L-methionine-dependent methyltransferase. The chain is S-adenosylmethionine sensor upstream of mTORC1 from Danio rerio (Zebrafish).